The primary structure comprises 249 residues: uncharacterized protein (249 aa).

The S4 RNA-binding domain maps to 4–71 (VRINKFLSEA…RKRYIILNKP (68 aa)). Asp-106 functions as the Nucleophile in the catalytic mechanism.

This sequence belongs to the pseudouridine synthase RsuA family.

The enzyme catalyses a uridine in RNA = a pseudouridine in RNA. This is an uncharacterized protein from Aquifex aeolicus (strain VF5).